Reading from the N-terminus, the 133-residue chain is ATP synthase epsilon chain (133 aa).

It belongs to the ATPase epsilon chain family. F-type ATPases have 2 components, CF(1) - the catalytic core - and CF(0) - the membrane proton channel. CF(1) has five subunits: alpha(3), beta(3), gamma(1), delta(1), epsilon(1). CF(0) has three main subunits: a, b and c.

It localises to the cell membrane. In terms of biological role, produces ATP from ADP in the presence of a proton gradient across the membrane. The sequence is that of ATP synthase epsilon chain from Clostridium perfringens (strain SM101 / Type A).